Consider the following 479-residue polypeptide: Auxin transporter-like protein 1 (479 aa).

Residues 1–58 lie on the Cytoplasmic side of the membrane; sequence MLSEKQGEETMMSSLNETIELNEEREEEKGASPGSGFKNFLWHGGSVYDAWFSCASNQ. A helical membrane pass occupies residues 59–76; sequence VAQVLLTLPYSFSQLGMI. Over 77–78 the chain is Extracellular; that stretch reads SG. The helical transmembrane segment at 79–99 threads the bilayer; sequence IIFQVFYGLMGSWTAYLISIL. The Cytoplasmic segment spans residues 100 to 134; it reads YVEYRSRKEKENVSFKNHVIQWFEVLEGLLGPYWK. The helical transmembrane segment at 135–155 threads the bilayer; the sequence is AIGLAFNCTFLLFGSVIQLIA. The Extracellular segment spans residues 156–171; that stretch reads CASNIYYINDHLDKRT. Residues 172-192 form a helical membrane-spanning segment; that stretch reads WTYIFGACCATTVFIPSFHNY. The Cytoplasmic segment spans residues 193-195; that stretch reads RIW. A helical membrane pass occupies residues 196 to 216; sequence SFLGLGMTTYTAWYMTIAAIV. Over 217 to 231 the chain is Extracellular; sequence HGQVENVVHSGPKKM. A helical transmembrane segment spans residues 232 to 252; that stretch reads VWYFTGATNILYTFGGHAVTV. The Cytoplasmic segment spans residues 253-265; it reads EIMHAMWKPQKFK. The helical transmembrane segment at 266-286 threads the bilayer; sequence AIYFFATLYVFTLTLPSAIAV. Residues 287–313 lie on the Extracellular side of the membrane; that stretch reads YWAFGDQLLDHSNAFSLLPRNAWRDAG. Residues 314–334 traverse the membrane as a helical segment; that stretch reads VILMLIHQFITFGFACTPLYF. The Cytoplasmic portion of the chain corresponds to 335-355; the sequence is VWEKVIGMHDTKSIFLRALAR. The chain crosses the membrane as a helical span at residues 356–376; the sequence is LPVVIPIWFLAIIFPFFGPIN. Position 377 (serine 377) is a topological domain, extracellular. A helical transmembrane segment spans residues 378 to 398; it reads AVGALLVSFTVYVIPASAHML. Residues 399–421 are Cytoplasmic-facing; it reads TYRSASARQNAAEKLPKVIPSWT. A helical transmembrane segment spans residues 422–442; it reads LMYVINAFVVIWVTIVGFGFG. Residues 443 to 479 lie on the Extracellular side of the membrane; the sequence is GWASMTNFIKQVDTFGLFAKCYQCPPKLPASNHTMHH. Asparagine 474 is a glycosylation site (N-linked (GlcNAc...) asparagine).

This sequence belongs to the amino acid/polyamine transporter 2 family. Amino acid/auxin permease (AAAP) (TC 2.A.18.1) subfamily. Shoots and roots of nodulating plants. Higher levels in roots, flowers and stems, lower in nodules, leaves, petioles and shoot apices.

The protein resides in the cell membrane. Its function is as follows. Carrier protein involved in proton-driven auxin influx. Mediates the formation of auxin gradient from developing leaves (site of auxin biosynthesis) to tips by contributing to the loading of auxin in vascular tissues and facilitating acropetal (base to tip) auxin transport within inner tissues of the root apex, and basipetal (tip to base) auxin transport within outer tissues of the root apex. May be involved in lateral roots and nodules formation. The chain is Auxin transporter-like protein 1 (LAX1) from Medicago truncatula (Barrel medic).